We begin with the raw amino-acid sequence, 1080 residues long: Carbamoyl phosphate synthase large chain (1080 aa).

Residues 1-403 (MPKRTDLRTI…SLQKAVRGLE (403 aa)) form a carboxyphosphate synthetic domain region. ATP contacts are provided by R129, R169, G175, G176, E208, V210, E215, G241, V242, H243, Q285, and E299. Residues 133-328 (RVAMQEIGLE…IAKIAAKLAV (196 aa)) enclose the ATP-grasp 1 domain. 3 residues coordinate Mg(2+): Q285, E299, and N301. Mn(2+) contacts are provided by Q285, E299, and N301. An oligomerization domain region spans residues 404–554 (TGKVGLEPTG…YSTYEEECEA (151 aa)). The segment at 555–942 (APSDRRKIMI…AFARAQEAGD (388 aa)) is carbamoyl phosphate synthetic domain. One can recognise an ATP-grasp 2 domain in the interval 679–876 (QRLVQQLGLR…LAKIAARCMT (198 aa)). Residues R715, R754, L756, E761, G787, V788, H789, S790, Q830, and E847 each coordinate ATP. Mg(2+) contacts are provided by Q830, E847, and N849. Q830, E847, and N849 together coordinate Mn(2+). Residues 943-1080 (IRAPQPGRAF…LQELHKELQV (138 aa)) form the MGS-like domain. The interval 943–1080 (IRAPQPGRAF…LQELHKELQV (138 aa)) is allosteric domain.

Belongs to the CarB family. As to quaternary structure, composed of two chains; the small (or glutamine) chain promotes the hydrolysis of glutamine to ammonia, which is used by the large (or ammonia) chain to synthesize carbamoyl phosphate. Tetramer of heterodimers (alpha,beta)4. Mg(2+) is required as a cofactor. It depends on Mn(2+) as a cofactor.

The enzyme catalyses hydrogencarbonate + L-glutamine + 2 ATP + H2O = carbamoyl phosphate + L-glutamate + 2 ADP + phosphate + 2 H(+). It catalyses the reaction hydrogencarbonate + NH4(+) + 2 ATP = carbamoyl phosphate + 2 ADP + phosphate + 2 H(+). Its pathway is amino-acid biosynthesis; L-arginine biosynthesis; carbamoyl phosphate from bicarbonate: step 1/1. The protein operates within pyrimidine metabolism; UMP biosynthesis via de novo pathway; (S)-dihydroorotate from bicarbonate: step 1/3. Its function is as follows. Large subunit of the glutamine-dependent carbamoyl phosphate synthetase (CPSase). CPSase catalyzes the formation of carbamoyl phosphate from the ammonia moiety of glutamine, carbonate, and phosphate donated by ATP, constituting the first step of 2 biosynthetic pathways, one leading to arginine and/or urea and the other to pyrimidine nucleotides. The large subunit (synthetase) binds the substrates ammonia (free or transferred from glutamine from the small subunit), hydrogencarbonate and ATP and carries out an ATP-coupled ligase reaction, activating hydrogencarbonate by forming carboxy phosphate which reacts with ammonia to form carbamoyl phosphate. The chain is Carbamoyl phosphate synthase large chain from Xylella fastidiosa (strain Temecula1 / ATCC 700964).